The following is a 916-amino-acid chain: Protein prickle (916 aa).

Disordered regions lie at residues 49 to 105 and 127 to 176; these read PLSP…AGGS and QHLQ…IPVD. Positions 145-156 are enriched in low complexity; that stretch reads SSPSPALSSSIT. Gly residues predominate over residues 157 to 171; sequence TGGGGVTRGGGGGGH. Residues 167–275 enclose the PET domain; the sequence is GGGGHIIPVD…TVKQLATNQI (109 aa). 3 LIM zinc-binding domains span residues 274–338, 339–399, and 400–462; these read QICD…ETLK, PRCS…MFAE, and YCDF…GEPP. Disordered stretches follow at residues 460 to 593, 635 to 671, 692 to 725, and 763 to 870; these read EPPT…PNHR, VIPGPSIAKTNPALTSSMPELSQSLQQQQQQQQQPQS, DAIQNASDDASHSIVELPTPPPIVSNTRDPENLP, and RSKS…DTVY. 3 stretches are compositionally biased toward polar residues: residues 507-517, 526-569, and 642-654; these read SPISERSTPHS, EMST…SRTL, and AKTNPALTSSMPE. Residues 655 to 671 are compositionally biased toward low complexity; the sequence is LSQSLQQQQQQQQQPQS. Positions 777-793 are enriched in basic residues; sequence RSSKSKRRSSHHHQHHR. A compositionally biased stretch (low complexity) spans 796-805; that stretch reads GESSSYSGTS. Over residues 829 to 844 the composition is skewed to basic and acidic residues; that stretch reads VPDVEFIEHQDHHRGD. Positions 852 to 867 are enriched in low complexity; that stretch reads RSVCSTCSSSSSSADD.

This sequence belongs to the prickle / espinas / testin family. In terms of assembly, interacts with dsh; PET and LIM domains interact with dsh DEP domain, in wing cells. Interacts with Vang in photoreceptor cells.

The protein localises to the cell membrane. Functionally, acts in a planar cell polarity (PCP) complex; polarization along the apical/basal axis of epithelial cells. PCP signaling in the wing disk requires the receptor fz and the cytoplasmic proteins dsh and pk. These act in a feedback loop leading to activation of the jnk cascade and subsequent polarized arrangement of hairs and bristles. Dgo and pk compete with one another for dsh binding, thereby modulating fz dsh activity and ensuring tight control over fz PCP signaling. Vang, stan and pk function together to regulate the establishment of tissue polarity in the adult eye. This is Protein prickle from Aedes aegypti (Yellowfever mosquito).